The following is a 129-amino-acid chain: MARDIVADFLSHLTNVRRKGEDKTAFFPVSNLIIKLVEIMKREGYIKNYRLVDSSRGKIIEIELSEYFNEANAIKPRFPVEYSELEKYEKRYLPALNFGRLILSTSKGLITNREAKEQKIGGVLIAYVY.

Belongs to the universal ribosomal protein uS8 family. As to quaternary structure, part of the 30S ribosomal subunit.

One of the primary rRNA binding proteins, it binds directly to 16S rRNA central domain where it helps coordinate assembly of the platform of the 30S subunit. The polypeptide is Small ribosomal subunit protein uS8 (Nanoarchaeum equitans (strain Kin4-M)).